The primary structure comprises 521 residues: MAWIWISLLLPILIYFPGCFSESEEERLLNHIFVERGYRKELRPVEHTGETVNVSLALTLSNLISLKEADETLTTNVWVELAWYDKRLAWDMETYNNIDILRVPPDMVWQPQLILENNNNGVFEVAYYSNVLISSDGFMYWLPPAIFQTSCSINVNYFPFDWQNCSLKFSSLTYNAKEINLQLRQDLDEASQRYYPVEWIIIDPEGFTENGEWEIVHIPAKKNIDRSLSPESTKYQDITFYLIIERKPLFYIINILAPCVLIALMANLVFYLPADSGEKMTLAISVLLAQSVFLLLISQRLPETSFAIPLISKYLMFIMVLVTIVVVSCVIVLNLHFRTPSTHAISERMKEIFLNKLPRILHMSQPAEPEPEPWSGVLLRRSSSVGYIVKAEEYYSVKSRSELMFEKQSERHGLTSRATPARVNPLNANNSQDQLYGEIKPAIDGANFIVKHIRDKNDYNEEKDNWYRIARTVDRLCLFLVTPVMIIGTLWIFLGGAYNLPPSLPFPGDPFIYTKEHRRLI.

The signal sequence occupies residues 1–21; sequence MAWIWISLLLPILIYFPGCFS. Residues 22–247 are Extracellular-facing; it reads ESEEERLLNH…ITFYLIIERK (226 aa). 2 N-linked (GlcNAc...) asparagine glycosylation sites follow: Asn53 and Asn164. Cys151 and Cys165 form a disulfide bridge. Helical transmembrane passes span 248–272, 280–297, and 314–335; these read PLFY…VFYL, MTLA…LLLI, and YLMF…VLNL. At 336–475 the chain is on the cytoplasmic side; that stretch reads HFRTPSTHAI…WYRIARTVDR (140 aa). Tyr394 is subject to Phosphotyrosine; by Tyr-kinases. Residues 476-494 form a helical membrane-spanning segment; sequence LCLFLVTPVMIIGTLWIFL.

The protein belongs to the ligand-gated ion channel (TC 1.A.9) family. Acetylcholine receptor (TC 1.A.9.1) subfamily. Pentamer of two alpha chains, and one each of the beta, delta, and gamma (in immature muscle) or epsilon (in mature muscle) chains.

The protein resides in the postsynaptic cell membrane. It is found in the cell membrane. It carries out the reaction K(+)(in) = K(+)(out). The enzyme catalyses Na(+)(in) = Na(+)(out). In terms of biological role, after binding acetylcholine, the AChR responds by an extensive change in conformation that affects all subunits and leads to opening of an ion-conducting channel across the plasma membrane. In Xenopus laevis (African clawed frog), this protein is Acetylcholine receptor subunit delta (chrnd).